The primary structure comprises 82 residues: Small ribosomal subunit protein uS17 (82 aa).

This sequence belongs to the universal ribosomal protein uS17 family. In terms of assembly, part of the 30S ribosomal subunit.

Functionally, one of the primary rRNA binding proteins, it binds specifically to the 5'-end of 16S ribosomal RNA. This chain is Small ribosomal subunit protein uS17, found in Ehrlichia ruminantium (strain Gardel).